Here is a 361-residue protein sequence, read N- to C-terminus: Probable pectinesterase 49 (361 aa).

The first 22 residues, 1 to 22 (MGYISLALVALLVFFASPVVLA), serve as a signal peptide directing secretion. A glycan (N-linked (GlcNAc...) asparagine) is linked at Asn-128. Gln-174 contributes to the substrate binding site. Asp-197 serves as the catalytic Proton donor. Asp-218 acts as the Nucleophile in catalysis. 2 residues coordinate substrate: Arg-275 and Trp-277.

It belongs to the pectinesterase family. In terms of tissue distribution, expressed in flower buds.

The protein resides in the secreted. The protein localises to the cell wall. The enzyme catalyses [(1-&gt;4)-alpha-D-galacturonosyl methyl ester](n) + n H2O = [(1-&gt;4)-alpha-D-galacturonosyl](n) + n methanol + n H(+). It participates in glycan metabolism; pectin degradation; 2-dehydro-3-deoxy-D-gluconate from pectin: step 1/5. Acts in the modification of cell walls via demethylesterification of cell wall pectin. This Arabidopsis thaliana (Mouse-ear cress) protein is Probable pectinesterase 49 (PME49).